We begin with the raw amino-acid sequence, 344 residues long: MNSITLLQPDDWHAHLRDGLALKRTVPDLAKQFARAICMPNLVPPVKTVEEALAYRERILAHVPEGNNFDPRMVLYFTDHTSPDEVRKIKESEHVNAIKLYPAGATTNSNNGVSDIRKVYAVIEQLEEHQVPLLLHGEVTHNHVDIFDREKRFLDEVLSPLLKQFPKLKVVLEHITTSDAAHFVLEQDRNVAATITPQHLLFNRNDMLVGGIKPYFYCLPILKRQTHQTTLLEVATSGNPKFFLGTDSAPHAQNAKENACGCAGCYSAPNAIELYAQAFDQVGKLERLEGFASHFGADFYGLPRNTSTITLVKEDNLVPESFDYLDNQKIIPLHAGKTLQWRKV.

His-13 and His-15 together coordinate Zn(2+). Residues 15–17 (HLR) and Asn-41 each bind substrate. The Zn(2+) site is built by Lys-99, His-136, and His-174. N6-carboxylysine is present on Lys-99. Position 136 (His-136) interacts with substrate. Leu-219 provides a ligand contact to substrate. Zn(2+) is bound at residue Asp-247. Asp-247 is a catalytic residue. Substrate is bound by residues His-251 and Ala-263.

The protein belongs to the metallo-dependent hydrolases superfamily. DHOase family. Class II DHOase subfamily. Homodimer. Zn(2+) serves as cofactor.

It carries out the reaction (S)-dihydroorotate + H2O = N-carbamoyl-L-aspartate + H(+). Its pathway is pyrimidine metabolism; UMP biosynthesis via de novo pathway; (S)-dihydroorotate from bicarbonate: step 3/3. Catalyzes the reversible cyclization of carbamoyl aspartate to dihydroorotate. This chain is Dihydroorotase, found in Acinetobacter baumannii (strain SDF).